We begin with the raw amino-acid sequence, 151 residues long: S-ribosylhomocysteine lyase (151 aa).

Residues His54, His58, and Cys121 each contribute to the Fe cation site.

The protein belongs to the LuxS family. In terms of assembly, homodimer. Fe cation is required as a cofactor.

The catalysed reaction is S-(5-deoxy-D-ribos-5-yl)-L-homocysteine = (S)-4,5-dihydroxypentane-2,3-dione + L-homocysteine. Involved in the synthesis of autoinducer 2 (AI-2) which is secreted by bacteria and is used to communicate both the cell density and the metabolic potential of the environment. The regulation of gene expression in response to changes in cell density is called quorum sensing. Catalyzes the transformation of S-ribosylhomocysteine (RHC) to homocysteine (HC) and 4,5-dihydroxy-2,3-pentadione (DPD). The protein is S-ribosylhomocysteine lyase of Clostridium perfringens (strain ATCC 13124 / DSM 756 / JCM 1290 / NCIMB 6125 / NCTC 8237 / Type A).